A 169-amino-acid polypeptide reads, in one-letter code: Cell division inhibitor SulA (169 aa).

Residues 1 to 13 show a composition bias toward polar residues; sequence MFTSAHANRSAQA. Positions 1–26 are disordered; it reads MFTSAHANRSAQASAPAGHYAHRSGE. The segment at 106–112 is ftsZ binding; it reads ALRTGNY. Residues 162–169 form a lon protease binding region; it reads KIHSNLYH.

This sequence belongs to the SulA family. In terms of assembly, interacts with FtsZ. In terms of processing, is rapidly cleaved and degraded by the Lon protease once DNA damage is repaired.

In terms of biological role, component of the SOS system and an inhibitor of cell division. Accumulation of SulA causes rapid cessation of cell division and the appearance of long, non-septate filaments. In the presence of GTP, binds a polymerization-competent form of FtsZ in a 1:1 ratio, thus inhibiting FtsZ polymerization and therefore preventing it from participating in the assembly of the Z ring. This mechanism prevents the premature segregation of damaged DNA to daughter cells during cell division. The chain is Cell division inhibitor SulA from Klebsiella pneumoniae subsp. pneumoniae (strain ATCC 700721 / MGH 78578).